The chain runs to 218 residues: Pyridoxine/pyridoxamine 5'-phosphate oxidase (218 aa).

Substrate-binding positions include 14–17 (RREY) and Lys72. Residues 67–72 (RIVLLK), 82–83 (YT), Arg88, Lys89, and Gln111 contribute to the FMN site. Residues Tyr129, Arg133, and Ser137 each coordinate substrate. FMN contacts are provided by residues 146–147 (QS) and Trp191. 197–199 (RLH) is a substrate binding site. Arg201 contributes to the FMN binding site.

This sequence belongs to the pyridoxamine 5'-phosphate oxidase family. In terms of assembly, homodimer. Requires FMN as cofactor.

The catalysed reaction is pyridoxamine 5'-phosphate + O2 + H2O = pyridoxal 5'-phosphate + H2O2 + NH4(+). It carries out the reaction pyridoxine 5'-phosphate + O2 = pyridoxal 5'-phosphate + H2O2. Its pathway is cofactor metabolism; pyridoxal 5'-phosphate salvage; pyridoxal 5'-phosphate from pyridoxamine 5'-phosphate: step 1/1. It participates in cofactor metabolism; pyridoxal 5'-phosphate salvage; pyridoxal 5'-phosphate from pyridoxine 5'-phosphate: step 1/1. Its function is as follows. Catalyzes the oxidation of either pyridoxine 5'-phosphate (PNP) or pyridoxamine 5'-phosphate (PMP) into pyridoxal 5'-phosphate (PLP). The protein is Pyridoxine/pyridoxamine 5'-phosphate oxidase of Escherichia coli O157:H7.